The chain runs to 92 residues: Long neurotoxin 1 (92 aa).

Residues 1–21 form the signal peptide; it reads MKILLLTLVVVTIVCLDLAYT. Disulfide bonds link cysteine 24–cysteine 41, cysteine 34–cysteine 62, cysteine 47–cysteine 51, cysteine 66–cysteine 77, and cysteine 78–cysteine 83.

This sequence belongs to the three-finger toxin family. Long-chain subfamily. Type II alpha-neurotoxin sub-subfamily. As to expression, expressed by the venom gland.

It localises to the secreted. Its function is as follows. Binds with high affinity to muscular (alpha-1/CHRNA1) and neuronal (alpha-7/CHRNA7) nicotinic acetylcholine receptor (nAChR) and inhibits acetylcholine from binding to the receptor, thereby impairing neuromuscular and neuronal transmission. In Hydrophis hardwickii (Hardwick's spine-bellied seasnake), this protein is Long neurotoxin 1.